The following is a 66-amino-acid chain: Large ribosomal subunit protein uL29 (66 aa).

It belongs to the universal ribosomal protein uL29 family.

This chain is Large ribosomal subunit protein uL29, found in Borrelia garinii subsp. bavariensis (strain ATCC BAA-2496 / DSM 23469 / PBi) (Borreliella bavariensis).